Here is a 135-residue protein sequence, read N- to C-terminus: Galectin-1 (135 aa).

Residue A2 is modified to N-acetylalanine. The Galectin domain maps to 4 to 135 (GLVASNLNLK…DFKIKCVAFE (132 aa)). K13, K19, and K29 each carry N6-acetyllysine. S30 carries the post-translational modification Phosphoserine. A beta-D-galactoside is bound by residues 45 to 49 (HFNPR), H53, N62, and 69 to 72 (WGTE). K108 is modified (N6-acetyllysine; alternate). At K108 the chain carries N6-succinyllysine; alternate. K128 is modified (N6-acetyllysine).

Homodimer. Binds LGALS3BP. Interacts with CD2, CD3, CD4, CD6, CD7, CD43, ALCAM and CD45. Interacts with laminin (via poly-N-acetyllactosamine). Interacts with SUSD2. Interacts with cargo receptor TMED10; the interaction mediates the translocation from the cytoplasm into the ERGIC (endoplasmic reticulum-Golgi intermediate compartment) and thereby secretion. Interacts with CD69.

It is found in the secreted. It localises to the extracellular space. The protein localises to the extracellular matrix. The protein resides in the cytoplasm. Its function is as follows. Lectin that binds beta-galactoside and a wide array of complex carbohydrates. Plays a role in regulating apoptosis, cell proliferation and cell differentiation. Inhibits CD45 protein phosphatase activity and therefore the dephosphorylation of Lyn kinase. Strong inducer of T-cell apoptosis. Plays a negative role in Th17 cell differentiation via activation of the receptor CD69. This Mus musculus (Mouse) protein is Galectin-1 (Lgals1).